Here is a 384-residue protein sequence, read N- to C-terminus: S-adenosylmethionine synthase (384 aa).

His-15 is a binding site for ATP. Asp-17 lines the Mg(2+) pocket. Position 43 (Glu-43) interacts with K(+). L-methionine is bound by residues Glu-56 and Gln-99. The interval 99-109 is flexible loop; the sequence is QSPDINQGVDR. Residues 164–166, 230–231, Asp-239, 245–246, Ala-262, and Lys-266 each bind ATP; these read DAK, RF, and RK. L-methionine is bound at residue Asp-239. Lys-270 contacts L-methionine.

It belongs to the AdoMet synthase family. As to quaternary structure, homotetramer; dimer of dimers. It depends on Mg(2+) as a cofactor. K(+) serves as cofactor.

The protein resides in the cytoplasm. It catalyses the reaction L-methionine + ATP + H2O = S-adenosyl-L-methionine + phosphate + diphosphate. Its pathway is amino-acid biosynthesis; S-adenosyl-L-methionine biosynthesis; S-adenosyl-L-methionine from L-methionine: step 1/1. Its function is as follows. Catalyzes the formation of S-adenosylmethionine (AdoMet) from methionine and ATP. The overall synthetic reaction is composed of two sequential steps, AdoMet formation and the subsequent tripolyphosphate hydrolysis which occurs prior to release of AdoMet from the enzyme. In Proteus mirabilis (strain HI4320), this protein is S-adenosylmethionine synthase.